The primary structure comprises 153 residues: 3-hydroxyacyl-[acyl-carrier-protein] dehydratase FabZ (153 aa).

The active site involves His-59.

This sequence belongs to the thioester dehydratase family. FabZ subfamily.

It localises to the cytoplasm. The enzyme catalyses a (3R)-hydroxyacyl-[ACP] = a (2E)-enoyl-[ACP] + H2O. Functionally, involved in unsaturated fatty acids biosynthesis. Catalyzes the dehydration of short chain beta-hydroxyacyl-ACPs and long chain saturated and unsaturated beta-hydroxyacyl-ACPs. The chain is 3-hydroxyacyl-[acyl-carrier-protein] dehydratase FabZ from Thermosynechococcus vestitus (strain NIES-2133 / IAM M-273 / BP-1).